We begin with the raw amino-acid sequence, 81 residues long: Protein Vpu (81 aa).

Topologically, residues 1-7 are extracellular; that stretch reads MQPLVII. The chain crosses the membrane as a helical span at residues 8 to 28; the sequence is AIAALVVAIIIAIVVWTIVYI. Residues 29–81 are Cytoplasmic-facing; sequence EYRRIKRQRKIDCLIDRIRERAEDSGNESEGEREELSKLVEMGHHAPWDVDDL. Residues 50-81 form a disordered region; the sequence is AEDSGNESEGEREELSKLVEMGHHAPWDVDDL. A phosphoserine; by host CK2 mark is found at S53 and S57. Residues 62 to 81 show a composition bias toward basic and acidic residues; the sequence is EELSKLVEMGHHAPWDVDDL.

Belongs to the HIV-1 VPU protein family. Homopentamer. Interacts with host CD4 and BRTC; these interactions induce proteasomal degradation of CD4. Interacts with host BST2; this interaction leads to the degradation of host BST2. Interacts with host FBXW11. Interacts with host AP1M1; this interaction plays a role in the mistrafficking and subsequent degradation of host BST2. Interacts with host RANBP2; this interaction allows Vpu to down-regulate host BLM sumoylation. Phosphorylated by host CK2. This phosphorylation is necessary for interaction with human BTRC and degradation of CD4.

The protein resides in the host membrane. With respect to regulation, ion channel activity is inhibited by hexamethylene amiloride in vitro. Functionally, enhances virion budding by targeting host CD4 and Tetherin/BST2 to proteasome degradation. Degradation of CD4 prevents any unwanted premature interactions between viral Env and its host receptor CD4 in the endoplasmic reticulum. Degradation of antiretroviral protein Tetherin/BST2 is important for virion budding, as BST2 tethers new viral particles to the host cell membrane. Mechanistically, Vpu bridges either CD4 or BST2 to BTRC, a substrate recognition subunit of the Skp1/Cullin/F-box protein E3 ubiquitin ligase, induces their ubiquitination and subsequent proteasomal degradation. The alteration of the E3 ligase specificity by Vpu seems to promote the degradation of host IKBKB, leading to NF-kappa-B down-regulation and subsequent apoptosis. Acts as a viroporin that forms an oligomeric ion channel in membranes. Modulates the host DNA repair mechanisms to promote degradation of nuclear viral cDNA in cells that are already productively infected in order to suppress immune sensing and proviral hyper-integration (superinfection). Manipulates PML-NBs and modulates SUMOylation of host BLM protein thereby enhancing its DNA-end processing activity toward viral unintegrated linear DNA. Also inhibits RAD52-mediated homologous repair of viral cDNA, preventing the generation of dead-end circular forms of single copies of the long terminal repeat and permitting sustained nucleolytic attack. This Human immunodeficiency virus type 1 group M subtype D (isolate NDK) (HIV-1) protein is Protein Vpu.